The sequence spans 307 residues: MRKIILCSPRGFCAGVIRAIQTVEVALEKWGRPIYVKHEIVHNRHVVDKLREKGAIFIEDLQEVPRNSRVIFSAHGVPPSLREEATERGLIAIDATCGLVTKVHSAVKMYAKKGYHIILIGKRKHVEIIGIRGEAPDQITVVENIAEVEALPFSAQDPLFYVTQTTLSMDDAADIVAALKARYPRIFTLPSSSICYATQNRQGALRNILPQVDFVYVIGDRQSSNSNRLREVAERRGVTARLVNHPDEVTEEILQYSGNIGITAGASTPEDVVQACLMKLQELIPDLSIEMDLFVEEDTVFQLPKEL.

Cys-13 contacts [4Fe-4S] cluster. 2 residues coordinate (2E)-4-hydroxy-3-methylbut-2-enyl diphosphate: His-42 and His-75. Dimethylallyl diphosphate is bound by residues His-42 and His-75. Isopentenyl diphosphate contacts are provided by His-42 and His-75. Residue Cys-97 participates in [4Fe-4S] cluster binding. His-125 contacts (2E)-4-hydroxy-3-methylbut-2-enyl diphosphate. A dimethylallyl diphosphate-binding site is contributed by His-125. Residue His-125 participates in isopentenyl diphosphate binding. Glu-127 serves as the catalytic Proton donor. Position 165 (Thr-165) interacts with (2E)-4-hydroxy-3-methylbut-2-enyl diphosphate. [4Fe-4S] cluster is bound at residue Cys-195. (2E)-4-hydroxy-3-methylbut-2-enyl diphosphate contacts are provided by Ser-223, Ser-224, Asn-225, and Ser-267. Residues Ser-223, Ser-224, Asn-225, and Ser-267 each coordinate dimethylallyl diphosphate. Residues Ser-223, Ser-224, Asn-225, and Ser-267 each contribute to the isopentenyl diphosphate site.

This sequence belongs to the IspH family. [4Fe-4S] cluster serves as cofactor.

The catalysed reaction is isopentenyl diphosphate + 2 oxidized [2Fe-2S]-[ferredoxin] + H2O = (2E)-4-hydroxy-3-methylbut-2-enyl diphosphate + 2 reduced [2Fe-2S]-[ferredoxin] + 2 H(+). It catalyses the reaction dimethylallyl diphosphate + 2 oxidized [2Fe-2S]-[ferredoxin] + H2O = (2E)-4-hydroxy-3-methylbut-2-enyl diphosphate + 2 reduced [2Fe-2S]-[ferredoxin] + 2 H(+). It participates in isoprenoid biosynthesis; dimethylallyl diphosphate biosynthesis; dimethylallyl diphosphate from (2E)-4-hydroxy-3-methylbutenyl diphosphate: step 1/1. Its pathway is isoprenoid biosynthesis; isopentenyl diphosphate biosynthesis via DXP pathway; isopentenyl diphosphate from 1-deoxy-D-xylulose 5-phosphate: step 6/6. Catalyzes the conversion of 1-hydroxy-2-methyl-2-(E)-butenyl 4-diphosphate (HMBPP) into a mixture of isopentenyl diphosphate (IPP) and dimethylallyl diphosphate (DMAPP). Acts in the terminal step of the DOXP/MEP pathway for isoprenoid precursor biosynthesis. The polypeptide is 4-hydroxy-3-methylbut-2-enyl diphosphate reductase (Chlamydia trachomatis serovar L2 (strain ATCC VR-902B / DSM 19102 / 434/Bu)).